Reading from the N-terminus, the 445-residue chain is GTPase Der (445 aa).

EngA-type G domains lie at 3-167 and 180-353; these read PVIA…YAGE and IKIA…AAAM. GTP-binding positions include 9 to 16, 56 to 60, 119 to 122, 186 to 193, 233 to 237, and 298 to 301; these read GRPNVGKS, DTGGF, NKAE, DTAGL, and NKWD. In terms of domain architecture, KH-like spans 354 to 438; sequence KKLPTPKLTR…PLRIEFRSST (85 aa).

Belongs to the TRAFAC class TrmE-Era-EngA-EngB-Septin-like GTPase superfamily. EngA (Der) GTPase family. Associates with the 50S ribosomal subunit.

Its function is as follows. GTPase that plays an essential role in the late steps of ribosome biogenesis. This Burkholderia pseudomallei (strain 1106a) protein is GTPase Der.